The primary structure comprises 362 residues: uncharacterized protein (362 aa).

7 consecutive transmembrane segments (helical) span residues 32 to 52 (GAGW…VGAV), 75 to 95 (FVDA…ADGV), 106 to 126 (VVML…DLSV), 148 to 168 (AAVG…GVGA), 176 to 196 (GVGT…VVVV), 287 to 307 (VFAL…PVAM), and 329 to 349 (VLVA…CGMF).

The protein belongs to the peptidase S58 family.

It localises to the cell membrane. Functionally, aminopeptidase. This is an uncharacterized protein from Mycobacterium leprae (strain TN).